The chain runs to 610 residues: Probable indole-3-acetic acid-amido synthetase GH3.1 (610 aa).

This sequence belongs to the IAA-amido conjugating enzyme family. Expressed in flowers.

In terms of biological role, may catalyze the synthesis of indole-3-acetic acid (IAA)-amino acid conjugates, providing a mechanism for the plant to cope with the presence of excess auxin. This Oryza sativa subsp. japonica (Rice) protein is Probable indole-3-acetic acid-amido synthetase GH3.1 (GH3.1).